Reading from the N-terminus, the 334-residue chain is Adenosine deaminase (334 aa).

Zn(2+) contacts are provided by His-12 and His-14. Substrate contacts are provided by His-14, Asp-16, and Gly-170. A Zn(2+)-binding site is contributed by His-197. Glu-200 functions as the Proton donor in the catalytic mechanism. Asp-278 serves as a coordination point for Zn(2+). Residue Asp-279 participates in substrate binding.

Belongs to the metallo-dependent hydrolases superfamily. Adenosine and AMP deaminases family. Adenosine deaminase subfamily. It depends on Zn(2+) as a cofactor.

The catalysed reaction is adenosine + H2O + H(+) = inosine + NH4(+). It carries out the reaction 2'-deoxyadenosine + H2O + H(+) = 2'-deoxyinosine + NH4(+). Catalyzes the hydrolytic deamination of adenosine and 2-deoxyadenosine. The protein is Adenosine deaminase of Yersinia pseudotuberculosis serotype O:1b (strain IP 31758).